Consider the following 89-residue polypeptide: Small ribosomal subunit protein uS17 (89 aa).

This sequence belongs to the universal ribosomal protein uS17 family. Part of the 30S ribosomal subunit.

In terms of biological role, one of the primary rRNA binding proteins, it binds specifically to the 5'-end of 16S ribosomal RNA. This is Small ribosomal subunit protein uS17 from Variovorax paradoxus (strain S110).